We begin with the raw amino-acid sequence, 320 residues long: MGEQQQQVERQPDLPPGFRFHPTDEEIITFYLAPKVVDSRGFCVAAIGEVDLNKCEPWDLPGKAKMNGEKEWYFYCQKDRKYPTGMRTNRATEAGYWKATGKDKEIFRNHHMLIGMKKTLVFYKGRAPKGDKTNWVMHEYRLADASPPPPPSSAEPPRQDDWAVCRIFHKSSGIKKPVPVAPHQVPAAANYQQQQQMAMASAGIIQVPMQMQMPSMSDQLQMLDDFSTTASLSLMAPPSYSTLPAGFPLQINSGAHPQQFVGNPSMYYHQQQQMDMAGGGFVVSEPSSLVVSPQDAADQNNNAADISSMACTMDAAIWKY.

One can recognise an NAC domain in the interval 14–170; that stretch reads LPPGFRFHPT…DWAVCRIFHK (157 aa). Residues 114–176 mediate DNA binding; that stretch reads IGMKKTLVFY…IFHKSSGIKK (63 aa).

Forms homodimers. Forms heterodimers with NAC26. As to expression, expressed in developing seeds.

The protein localises to the nucleus. Its subcellular location is the endoplasmic reticulum. Functionally, transcription factor that acts redundantly with NAC26 to regulate the expression of genes involved in the biosynthesis of starch and storage proteins in grain. Directly binds to the promoters of starch synthase 1 (SS1), pullulanase (PUL), glutelin A1 (GLUA1), glutelins B4 and B5 (GLUB4 and GLUB5), alpha-globulin and 16 kDa prolamin, and activates their expression. Possesses transactivation activity in yeast. The sequence is that of NAC domain-containing protein 20 from Oryza sativa subsp. indica (Rice).